We begin with the raw amino-acid sequence, 541 residues long: MASSGGGNTGAGGTSGLGLGLGLGLCMGEATGDAEEEAAAAEAVGRLATSLWLRLRGWEAVLAAAQRLLVWEKPLHSLVTAATLNGLFWLLSSSSLRPFFLLSISLLTYFLLDLWHPRFLPDVSAPPPEEPHSDSEGAGSGAQPHLLSVPELCRYLAESWLTFQIHLQELLQYKRQNPAQFCARVCSGCAVLAVLGHYVPGIMISYIVLLSILLWPLVVYHELIQRMYTRLEPLLMQLDYSMKAEADALHHKHDKRKRQGKNAPPAGDEPLAETESESEAELAGFSPVVDVKKTALALAITDSELSDEEASILESGGFSVSRATTPQLTDVSEDLDQQSLPSEPEEALSRELGDGEETELAPPEDLLSAPPALSKQALDTEEEGAADKETLLQLSSPLHFVNTHFNGAGSPQEGVKCPPGGPVETLSPEAVSGDLMAPSSTLSPQLCLAESGPVTLLSPSVLPSLPQDSPQALTAPEEEEALTTEDFELLDQGELEQLNAELGLGPEMPPKPPDVLPPPPLGPDSHSLVQSDQEAHAVVEP.

The next 3 helical transmembrane spans lie at 75–91 (LHSL…FWLL), 99–115 (FFLL…LDLW), and 199–219 (VPGI…PLVV). A disordered region spans residues 249-282 (LHHKHDKRKRQGKNAPPAGDEPLAETESESEAEL). Residues 250 to 260 (HHKHDKRKRQG) show a composition bias toward basic residues. Residues 270 to 280 (PLAETESESEA) are compositionally biased toward acidic residues. Position 274 is a phosphothreonine (Thr-274). A phosphoserine mark is found at Ser-276, Ser-278, Ser-286, and Ser-306. Thr-329 bears the Phosphothreonine mark. Disordered stretches follow at residues 331 to 389 (VSED…ADKE), 403 to 440 (THFN…APSS), and 459 to 481 (PSVL…EEEA). Phosphoserine is present on residues Ser-332, Ser-339, and Ser-342. The span at 459–475 (PSVLPSLPQDSPQALTA) shows a compositional bias: low complexity. Positions 485-490 (EDFELL) match the LIR motif motif. The disordered stretch occupies residues 496-541 (EQLNAELGLGPEMPPKPPDVLPPPPLGPDSHSLVQSDQEAHAVVEP). Over residues 507 to 522 (EMPPKPPDVLPPPPLG) the composition is skewed to pro residues.

It belongs to the RETREG family. As to quaternary structure, interacts with ATG8 family modifier proteins MAP1LC3A, MAP1LC3B, GABARAP, GABARAPL1 and GABARAPL2. Interacts with CANX.

The protein resides in the endoplasmic reticulum membrane. Its function is as follows. Endoplasmic reticulum (ER)-anchored autophagy regulator which exists in an inactive state under basal conditions but is activated following cellular stress. When activated, induces ER fragmentation and mediates ER delivery into lysosomes through sequestration into autophagosomes via interaction with ATG8 family proteins. Required for collagen quality control in a LIR motif-independent manner. This chain is Reticulophagy regulator 2 (Retreg2), found in Rattus norvegicus (Rat).